The sequence spans 261 residues: EKC/KEOPS complex subunit BUD32 (261 aa).

A Protein kinase domain is found at 16-261 (DVDIAPISQG…LRGRKRSMLG (246 aa)). ATP contacts are provided by residues 22–30 (ISQGAEAIV) and lysine 43. Aspartate 161 acts as the Proton acceptor in catalysis. 2 positions are modified to phosphoserine; by autocatalysis: serine 187 and serine 189.

Belongs to the protein kinase superfamily. BUD32 family. As to quaternary structure, component of the EKC/KEOPS complex composed of at least BUD32, CGI121, GON7, KAE1 and PCC1; the whole complex dimerizes.

It is found in the cytoplasm. The protein localises to the nucleus. The protein resides in the chromosome. Its subcellular location is the telomere. It carries out the reaction L-seryl-[protein] + ATP = O-phospho-L-seryl-[protein] + ADP + H(+). The catalysed reaction is L-threonyl-[protein] + ATP = O-phospho-L-threonyl-[protein] + ADP + H(+). Its function is as follows. Component of the EKC/KEOPS complex that is required for the formation of a threonylcarbamoyl group on adenosine at position 37 (t(6)A37) in tRNAs that read codons beginning with adenine. The complex is probably involved in the transfer of the threonylcarbamoyl moiety of threonylcarbamoyl-AMP (TC-AMP) to the N6 group of A37. BUD32 has ATPase activity in the context of the EKC/KEOPS complex and likely plays a supporting role to the catalytic subunit KAE1. The EKC/KEOPS complex also promotes both telomere uncapping and telomere elongation. The complex is required for efficient recruitment of transcriptional coactivators. Important for bud site selection. This Saccharomyces cerevisiae (strain ATCC 204508 / S288c) (Baker's yeast) protein is EKC/KEOPS complex subunit BUD32 (BUD32).